We begin with the raw amino-acid sequence, 388 residues long: Succinate--CoA ligase [ADP-forming] subunit beta (388 aa).

The ATP-grasp domain maps to 9–244; sequence KQLFAEYGLP…PSQDDPREAH (236 aa). Residues K46, 53–55, E99, T102, and E107 contribute to the ATP site; that span reads GRG. Residues N199 and D213 each contribute to the Mg(2+) site. Substrate-binding positions include N264 and 321-323; that span reads GIV.

The protein belongs to the succinate/malate CoA ligase beta subunit family. In terms of assembly, heterotetramer of two alpha and two beta subunits. Mg(2+) serves as cofactor.

It catalyses the reaction succinate + ATP + CoA = succinyl-CoA + ADP + phosphate. The enzyme catalyses GTP + succinate + CoA = succinyl-CoA + GDP + phosphate. The protein operates within carbohydrate metabolism; tricarboxylic acid cycle; succinate from succinyl-CoA (ligase route): step 1/1. Its function is as follows. Succinyl-CoA synthetase functions in the citric acid cycle (TCA), coupling the hydrolysis of succinyl-CoA to the synthesis of either ATP or GTP and thus represents the only step of substrate-level phosphorylation in the TCA. The beta subunit provides nucleotide specificity of the enzyme and binds the substrate succinate, while the binding sites for coenzyme A and phosphate are found in the alpha subunit. In Pseudomonas syringae pv. syringae (strain B728a), this protein is Succinate--CoA ligase [ADP-forming] subunit beta.